A 364-amino-acid polypeptide reads, in one-letter code: Chorismate synthase (364 aa).

2 residues coordinate NADP(+): arginine 48 and arginine 54. FMN is bound by residues 125-127 (RSS), glycine 282, 297-301 (KPPAS), and arginine 323.

It belongs to the chorismate synthase family. In terms of assembly, homotetramer. It depends on FMNH2 as a cofactor.

It catalyses the reaction 5-O-(1-carboxyvinyl)-3-phosphoshikimate = chorismate + phosphate. It functions in the pathway metabolic intermediate biosynthesis; chorismate biosynthesis; chorismate from D-erythrose 4-phosphate and phosphoenolpyruvate: step 7/7. Catalyzes the anti-1,4-elimination of the C-3 phosphate and the C-6 proR hydrogen from 5-enolpyruvylshikimate-3-phosphate (EPSP) to yield chorismate, which is the branch point compound that serves as the starting substrate for the three terminal pathways of aromatic amino acid biosynthesis. This reaction introduces a second double bond into the aromatic ring system. The polypeptide is Chorismate synthase (Chloroflexus aggregans (strain MD-66 / DSM 9485)).